We begin with the raw amino-acid sequence, 292 residues long: AT-hook motif nuclear-localized protein 23 (292 aa).

The tract at residues 23–100 (HLHHNSSSDD…SKNKPKPPVI (78 aa)) is disordered. The segment covering 60–79 (SGGGSGSSGGGGGHGGGGDV) has biased composition (gly residues). Positions 82–94 (RRPRGRPPGSKNK) form a DNA-binding region, a.T hook. Positions 106-242 (ANTLRAHILE…EDEQQQQLGG (137 aa)) constitute a PPC domain.

The protein resides in the nucleus. Transcription factor that specifically binds AT-rich DNA sequences related to the nuclear matrix attachment regions (MARs). The polypeptide is AT-hook motif nuclear-localized protein 23 (Arabidopsis thaliana (Mouse-ear cress)).